A 246-amino-acid chain; its full sequence is 5'-nucleotidase SurE (246 aa).

Residues aspartate 8, aspartate 9, serine 39, and asparagine 91 each coordinate a divalent metal cation.

It belongs to the SurE nucleotidase family. It depends on a divalent metal cation as a cofactor.

The protein resides in the cytoplasm. It catalyses the reaction a ribonucleoside 5'-phosphate + H2O = a ribonucleoside + phosphate. In terms of biological role, nucleotidase that shows phosphatase activity on nucleoside 5'-monophosphates. The polypeptide is 5'-nucleotidase SurE (Dechloromonas aromatica (strain RCB)).